A 427-amino-acid chain; its full sequence is uncharacterized protein (427 aa).

Belongs to the MG032/MG096/MG288 family.

This is an uncharacterized protein from Mycoplasma pneumoniae (strain ATCC 29342 / M129 / Subtype 1) (Mycoplasmoides pneumoniae).